The following is a 131-amino-acid chain: Small ribosomal subunit protein uS8 (131 aa).

The protein belongs to the universal ribosomal protein uS8 family. As to quaternary structure, part of the 30S ribosomal subunit. Contacts proteins S5 and S12.

In terms of biological role, one of the primary rRNA binding proteins, it binds directly to 16S rRNA central domain where it helps coordinate assembly of the platform of the 30S subunit. The sequence is that of Small ribosomal subunit protein uS8 from Shewanella amazonensis (strain ATCC BAA-1098 / SB2B).